We begin with the raw amino-acid sequence, 311 residues long: tRNA-cytidine(32) 2-sulfurtransferase (311 aa).

A PP-loop motif motif is present at residues 47–52 (SGGKDS). Positions 122, 125, and 213 each coordinate [4Fe-4S] cluster.

This sequence belongs to the TtcA family. Homodimer. Mg(2+) is required as a cofactor. It depends on [4Fe-4S] cluster as a cofactor.

Its subcellular location is the cytoplasm. It carries out the reaction cytidine(32) in tRNA + S-sulfanyl-L-cysteinyl-[cysteine desulfurase] + AH2 + ATP = 2-thiocytidine(32) in tRNA + L-cysteinyl-[cysteine desulfurase] + A + AMP + diphosphate + H(+). The protein operates within tRNA modification. Catalyzes the ATP-dependent 2-thiolation of cytidine in position 32 of tRNA, to form 2-thiocytidine (s(2)C32). The sulfur atoms are provided by the cysteine/cysteine desulfurase (IscS) system. This Escherichia coli O1:K1 / APEC protein is tRNA-cytidine(32) 2-sulfurtransferase.